The sequence spans 7067 residues: Replicase polyprotein 1ab (7067 aa).

In terms of domain architecture, CoV Nsp1 globular spans 12–127; sequence THVQLSLPVL…YRNVLLRKNG (116 aa). Positions 148–179 constitute a BetaCoV Nsp1 C-terminal domain; that stretch reads ELGTDPIEDYEQNWNTKHGSGALRELTRELNG. The CoV Nsp2 N-terminal domain occupies 183 to 456; sequence TRYVDNNFCG…NEDLLEILNR (274 aa). Zn(2+)-binding residues include cysteine 200, cysteine 231, histidine 234, histidine 236, cysteine 323, cysteine 326, cysteine 341, cysteine 344, cysteine 370, cysteine 373, histidine 382, and cysteine 416. Residues 200-236 form a C2H2 region; that stretch reads CIKDFLARAGKSMCTLSEQLDYIESKRGVYCCREHEH. A C4 region spans residues 323 to 344; sequence CNHCDEVSWQTCDFLKATCEQC. The interval 370 to 416 is C2HC; it reads CPACQDPEVGPEHSVADYHNHSNIETRLRKGGRTKCFGGCVFSYVGC. The region spanning 458–688 is the CoV Nsp2 middle domain; that stretch reads RVNINIVGDF…LGVVNKALEM (231 aa). Residues 690–818 form the CoV Nsp2 C-terminal domain; that stretch reads LDQVTIAGTK…TNNVFRLKGG (129 aa). The 109-residue stretch at 822–930 folds into the Ubiquitin-like 1 domain; that stretch reads KGVTFGEDTV…MYCSFYPPDE (109 aa). Macro domains follow at residues 998-1164, 1201-1329, and 1337-1464; these read VNQF…LDYL, KIKA…LPSE, and VLGT…TSSS. The DPUP domain occupies 1466–1532; it reads TPEEYFVETT…PLDKLKSLLS (67 aa). Positions 1536–1591 constitute a Ubiquitin-like 2 domain; the sequence is VKTIKVFTTVDNTNLHTHIVDMSMTYGQQFGPTYLDGADVTKIKPHVNHEGKTFFV. The region spanning 1605–1869 is the Peptidase C16 domain; that stretch reads YYHTIDESFL…YTEIEPKLDG (265 aa). The active-site For PL-PRO activity is cysteine 1645. Cysteine 1723, cysteine 1726, cysteine 1758, and cysteine 1760 together coordinate Zn(2+). A C4-type zinc finger spans residues 1723–1760; it reads CKHCGQKTTTLKGVEAVMYMGTLSYDELKTGVSIPCVC. Catalysis depends on for PL-PRO activity residues histidine 1806 and aspartate 1820. A Nucleic acid-binding domain is found at 1882–1992; the sequence is PIDLVPTQPM…CLWSTKPVDT (111 aa). One can recognise a G2M domain in the interval 2017 to 2126; that stretch reads TTSEEVVENP…LGQTAVITSN (110 aa). An HD1 region spans residues 2086-2365; it reads LALGLKTLAT…IFFASFYYVW (280 aa). Residues 2197 to 2217 traverse the membrane as a helical segment; the sequence is LFTIVMWLLLLSICLGSLTYV. The 3Ecto domain maps to 2218 to 2288; that stretch reads TAVLGVCLSS…QVTISSYKLD (71 aa). 2 cysteine pairs are disulfide-bonded: cysteine 2234-cysteine 2262 and cysteine 2253-cysteine 2259. The next 2 helical transmembrane spans lie at 2298–2318 and 2345–2365; these read WLLA…SAIM and MAPV…YYVW. The Y1 stretch occupies residues 2366-2456; that stretch reads KSYVHIMDGC…QFKRPINPTD (91 aa). The 369-residue stretch at 2366 to 2734 folds into the CoV Nsp3 Y domain; the sequence is KSYVHIMDGC…ITTKISLKGG (369 aa). Zn(2+) contacts are provided by histidine 2370, cysteine 2375, cysteine 2380, cysteine 2383, cysteine 2416, histidine 2419, cysteine 2423, and cysteine 2426. Residues 2370–2383 are ZF1; that stretch reads HIMDGCTSSTCMMC. Residues 2416–2426 are ZF2; sequence CKAHNWNCLNC. The segment at 2457–2551 is Y2; the sequence is QSAYVVDSVT…LLDQALVSDV (95 aa). The tract at residues 2457–2734 is coV-Y; sequence QSAYVVDSVT…ITTKISLKGG (278 aa). The interval 2552-2633 is Y3; sequence GDSTEVSVKM…ECLKLSHHSD (82 aa). The Y4 stretch occupies residues 2634–2734; the sequence is IEVTGDSCNN…ITTKISLKGG (101 aa). 7 helical membrane passes run 2744 to 2764, 2986 to 3006, 3016 to 3036, 3048 to 3068, 3071 to 3091, 3099 to 3119, and 3136 to 3156; these read LLKV…IMPV, PGVF…TPLV, ASVV…YYFM, VVAA…LAPA, FLPG…TNDV, WFAM…VFCI, and VMFN…TFLL. The interval 2749-3156 is HD2; sequence LLCVLAALFC…EEAALCTFLL (408 aa). Residues 3136–3234 form the Nsp4C domain; it reads VMFNGVTFST…QTSITSAVLQ (99 aa). One can recognise a Peptidase C30 domain in the interval 3235–3540; sequence SGFRKMAFPS…VRQCSGVTFQ (306 aa). Active-site for 3CL-PRO activity residues include histidine 3275 and cysteine 3379. The next 7 membrane-spanning stretches (helical) occupy residues 3558 to 3578, 3580 to 3600, 3606 to 3626, 3652 to 3672, 3679 to 3698, 3722 to 3742, and 3750 to 3770; these read FLTS…FFVY, NAFL…MLLV, FLCL…MVYM, DCVM…RTVY, VWTL…GNSL, IMFL…LLFI, and IMLV…LFCL. The segment at 3558-3770 is HD3; it reads FLTSLLILVQ…CCCYFGLFCL (213 aa). Positions 3831 to 3913 constitute a RdRp Nsp7 cofactor domain; the sequence is SKMSDVKCTS…EMLDNRATLQ (83 aa). Residues 3914-4111 form the RdRp Nsp8 cofactor domain; sequence AIASEFSSLP…LRANSAVKLQ (198 aa). Positions 4112-4224 constitute a Nsp9 ssRNA-binding domain; the sequence is NNELSPVALR…GSLAATVRLQ (113 aa). The ExoN/MTase coactivator domain occupies 4225–4363; sequence AGNATEVPAN…CDQLREPMMQ (139 aa). Residues cysteine 4298, cysteine 4301, histidine 4307, cysteine 4314, cysteine 4341, cysteine 4344, cysteine 4352, and cysteine 4354 each coordinate Zn(2+). 2 zinc fingers span residues 4298–4314 and 4341–4354; these read CLYC…KGFC and CTVC…GCSC. Residues 4370 to 4624 form the NiRAN domain; it reads FLNRVCGVSA…AAESHMDADL (255 aa). Positions 4572 and 4581 each coordinate Mn(2+). Residues 4629–4727 enclose the Nsp12 Interface domain; that stretch reads VKWDLLKYDF…HNQDVNLHSS (99 aa). Zn(2+) is bound by residues histidine 4658, cysteine 4664, cysteine 4669, cysteine 4673, and cysteine 4850. One can recognise a Nsp12 RNA-dependent RNA polymerase domain in the interval 4728–5295; that stretch reads RLSFKELLVY…AMYTPHTVLQ (568 aa). The rdRp Fingers N-ter stretch occupies residues 4730–4944; that stretch reads SFKELLVYAA…HQKLLKSIAA (215 aa). The segment at 4945 to 4983 is rdRp Palm N-ter; that stretch reads TRGATVVIGTSKFYGGWHNMLKTVYSDVESPHLMGWDYP. One can recognise a RdRp catalytic domain in the interval 4975–5137; the sequence is PHLMGWDYPK…CYNSNYAAQG (163 aa). The tract at residues 4984 to 5042 is rdRp Fingers C-ter; it reads KCDRAMPNMLRIMASLILARKHSTCCNLSHRFYRLANECAQVLSEMVMCGGSLYVKPGG. Zn(2+) contacts are provided by histidine 5005, cysteine 5008, and cysteine 5009. The segment at 5043–5178 is rdRp Palm C-ter; sequence TSSGDATTAY…TRGPHEFCSQ (136 aa). Catalysis depends on residues serine 5122, aspartate 5123, and aspartate 5124. The rdRp Thumb stretch occupies residues 5179 to 5295; it reads HTMLVKQGDD…AMYTPHTVLQ (117 aa). In terms of domain architecture, CV ZBD spans 5296 to 5408; it reads AVGACVLCNS…TDFNAIATCD (113 aa). Residues cysteine 5300, cysteine 5303, cysteine 5311, cysteine 5314, cysteine 5321, cysteine 5324, histidine 5328, histidine 5334, cysteine 5345, cysteine 5350, cysteine 5367, and histidine 5370 each contribute to the Zn(2+) site. Positions 5552-5733 constitute a (+)RNA virus helicase ATP-binding domain; that stretch reads NISNEFSSNV…MKTIGPDMFL (182 aa). 5577-5584 is a binding site for ATP; that stretch reads GPPGTGKS. The (+)RNA virus helicase C-terminal domain maps to 5734–5903; it reads GTCRRCPAEI…TLQAENVTGL (170 aa). The 216-residue stretch at 5968–6183 folds into the ExoN domain; it reads MFITREEAIR…RCLAVHECFV (216 aa). Residues aspartate 5986, glutamate 5988, and glutamate 6087 contribute to the active site. Positions 6103, 6106, 6122, 6125, 6153, 6157, and 6160 each coordinate Zn(2+). Residues histidine 6164 and aspartate 6169 contribute to the active site. Cysteine 6175 lines the Zn(2+) pocket. Positions 6192–6423 constitute an N7-MTase domain; it reads YPIIGDELKI…NLWNTFTKLQ (232 aa). Residue 6227–6233 coordinates S-adenosyl-L-methionine; the sequence is DIGNPKA. Residues 6310-6324 are gpppA-binding; the sequence is CDGGSLYVNKHAFHT. Residues cysteine 6348, cysteine 6369, cysteine 6380, and histidine 6383 each coordinate Zn(2+). In terms of domain architecture, Nsp15 N-terminal oligomerization spans 6424–6484; it reads SLENVAYNVV…NVAFELWAKR (61 aa). The AV-Nsp11N/CoV-Nsp15M domain occupies 6485 to 6610; that stretch reads NIKPVPEIKI…YFKKVDGIIQ (126 aa). A NendoU domain is found at 6627–6766; the sequence is KPRSQMETDF…KDGHVETFYP (140 aa). Catalysis depends on residues histidine 6657, histidine 6672, lysine 6712, lysine 6815, aspartate 6899, lysine 6939, and glutamate 6972. The region spanning 6771-7065 is the Nidovirus-type SAM-dependent 2'-O-MTase domain; it reads SQAWQPGVAM…RVVVSSDILV (295 aa).

Belongs to the coronaviruses polyprotein 1ab family. As to quaternary structure, interacts with host PHB and PHB2. In terms of assembly, interacts with papain-like protease nsp3 and non-structural protein 6. Monomer. Homodimer. Only the homodimer shows catalytic activity. As to quaternary structure, interacts with nsp8 and nsp12 to form the replication-transcription complex (RTC): nsp12, nsp7, two subunits of nsp8, and up to two subunits of nsp13. In terms of assembly, interacts with nsp7, nsp13 and nsp12 to form the replication-transcription complex (RTC): nsp12, nsp7, two subunits of nsp8, and up to two subunits of nsp13. Interacts with nsp12. As to quaternary structure, interacts with proofreading exoribonuclease nsp14 and 2'-O-methyltransferase nsp16; these interactions enhance nsp14 and nsp16 enzymatic activities. In terms of assembly, interacts with nsp7 and nsp8 to form the replication-transcription complex (RTC): nsp12, nsp7, two subunits of nsp8, and up to two subunits of nsp13. Interacts with nsp9. Interacts with nsp8 to form the replication-transcription complex (RTC): nsp12, nsp7, two subunits of nsp8, and up to two subunits of nsp13. It depends on Mn(2+) as a cofactor. The cofactor is Mg(2+). Specific enzymatic cleavages in vivo by its own proteases yield mature proteins. 3CL-PRO and PL-PRO proteinases are autocatalytically processed.

Its subcellular location is the host membrane. The protein localises to the host cytoplasm. It localises to the host perinuclear region. The protein resides in the host endoplasmic reticulum-Golgi intermediate compartment. It catalyses the reaction RNA(n) + a ribonucleoside 5'-triphosphate = RNA(n+1) + diphosphate. The catalysed reaction is ATP + H2O = ADP + phosphate + H(+). The enzyme catalyses Thiol-dependent hydrolysis of ester, thioester, amide, peptide and isopeptide bonds formed by the C-terminal Gly of ubiquitin (a 76-residue protein attached to proteins as an intracellular targeting signal).. It carries out the reaction a 5'-end (N(7)-methyl 5'-triphosphoguanosine)-ribonucleoside in mRNA + S-adenosyl-L-methionine = a 5'-end (N(7)-methyl 5'-triphosphoguanosine)-(2'-O-methyl-ribonucleoside) in mRNA + S-adenosyl-L-homocysteine + H(+). It catalyses the reaction uridylyl-uridylyl-ribonucleotide-RNA = a 3'-end uridylyl-2',3'-cyclophospho-uridine-RNA + a 5'-end dephospho-ribonucleoside-RNA. The catalysed reaction is a 5'-end diphospho-ribonucleoside in mRNA + GTP + H(+) = a 5'-end (5'-triphosphoguanosine)-ribonucleoside in mRNA + diphosphate. The enzyme catalyses a 5'-end (5'-triphosphoguanosine)-ribonucleoside in mRNA + S-adenosyl-L-methionine = a 5'-end (N(7)-methyl 5'-triphosphoguanosine)-ribonucleoside in mRNA + S-adenosyl-L-homocysteine. Functionally, the replicase polyprotein of coronaviruses is a multifunctional protein: it contains the activities necessary for the transcription of negative stranded RNA, leader RNA, subgenomic mRNAs and progeny virion RNA as well as proteinases responsible for the cleavage of the polyprotein into functional products. In terms of biological role, inhibits host translation by interacting with the 40S ribosomal subunit. The nsp1-40S ribosome complex further induces an endonucleolytic cleavage near the 5'UTR of host mRNAs, targeting them for degradation. Viral mRNAs are not susceptible to nsp1-mediated endonucleolytic RNA cleavage thanks to the presence of a 5'-end leader sequence and are therefore protected from degradation. By suppressing host gene expression, nsp1 facilitates efficient viral gene expression in infected cells and evasion from host immune response. May play a role in the modulation of host cell survival signaling pathway by interacting with host PHB and PHB2. Indeed, these two proteins play a role in maintaining the functional integrity of the mitochondria and protecting cells from various stresses. Its function is as follows. Responsible for the cleavages located at the N-terminus of the replicase polyprotein. In addition, PL-PRO possesses a deubiquitinating/deISGylating activity and processes both 'Lys-48'- and 'Lys-63'-linked polyubiquitin chains from cellular substrates. Participates together with nsp4 in the assembly of virally-induced cytoplasmic double-membrane vesicles necessary for viral replication. Antagonizes innate immune induction of type I interferon by blocking the phosphorylation, dimerization and subsequent nuclear translocation of host IRF3. Also prevents host NF-kappa-B signaling. Functionally, participates in the assembly of virally-induced cytoplasmic double-membrane vesicles necessary for viral replication. In terms of biological role, cleaves the C-terminus of replicase polyprotein at 11 sites. Recognizes substrates containing the core sequence [ILMVF]-Q-|-[SGACN]. Also able to bind an ADP-ribose-1''-phosphate (ADRP). Plays a role in the initial induction of autophagosomes from host endoplasmic reticulum. Later, limits the expansion of these phagosomes that are no longer able to deliver viral components to lysosomes. Its function is as follows. Forms a hexadecamer with nsp8 (8 subunits of each) that may participate in viral replication by acting as a primase. Alternatively, may synthesize substantially longer products than oligonucleotide primers. Functionally, forms a hexadecamer with nsp7 (8 subunits of each) that may participate in viral replication by acting as a primase. Alternatively, may synthesize substantially longer products than oligonucleotide primers. In terms of biological role, forms a primer, NSP9-pU, which is utilized by the polymerase for the initiation of RNA chains. Interacts with ribosome signal recognition particle RNA (SRP). Together with NSP8, suppress protein integration into the cell membrane, thereby disrupting host immune defenses. Plays a pivotal role in viral transcription by stimulating both nsp14 3'-5' exoribonuclease and nsp16 2'-O-methyltransferase activities. Therefore plays an essential role in viral mRNAs cap methylation. Its function is as follows. RNA-directed RNA polymerase that catalyzes the transcription of viral genomic and subgenomic RNAs. Acts in complex with nsp7 and nsp8 to transcribe both the minus and positive strands of genomic RNA. The kinase-like NiRAN domain of NSP12 attaches one or more nucleotides to the amino terminus of NSP9, forming a covalent RNA-protein intermediate that serves as transcription/replication primer. Subgenomic RNAs (sgRNAs) are formed by discontinuous transcription: The polymerase has the ability to pause at transcription-regulating sequences (TRS) and jump to the leader TRS, resulting in a major deletion. This creates a series of subgenomic RNAs that are replicated, transcribed and translated. In addition, Nsp12 is a subunit of the viral RNA capping enzyme that catalyzes the RNA guanylyltransferase reaction for genomic and sub-genomic RNAs. Subsequently, the NiRAN domain transfers RNA to GDP, and forms the core cap structure GpppA-RNA. Functionally, multi-functional protein with a zinc-binding domain in N-terminus displaying RNA and DNA duplex-unwinding activities with 5' to 3' polarity. Activity of helicase is dependent on magnesium. In terms of biological role, plays a role in viral RNA synthesis through two distinct activities. The N7-guanine methyltransferase activity plays a role in the formation of the cap structure GpppA-RNA. The proofreading exoribonuclease reduces the sensitivity of the virus to RNA mutagens during replication. This activity acts on both ssRNA and dsRNA in a 3'-5' direction. Plays a role in viral transcription/replication and prevents the simultaneous activation of host cell dsRNA sensors, such as MDA5/IFIH1, OAS, and PKR. Acts by degrading the 5'-polyuridines generated during replication of the poly(A) region of viral genomic and subgenomic RNAs. Catalyzes a two-step reaction in which a 2'3'-cyclic phosphate (2'3'-cP) is first generated by 2'-O transesterification, which is then hydrolyzed to a 3'-phosphate (3'-P). If not degraded, poly(U) RNA would hybridize with poly(A) RNA tails and activate host dsRNA sensors. Its function is as follows. Methyltransferase that mediates mRNA cap 2'-O-ribose methylation to the 5'-cap structure of viral mRNAs. N7-methyl guanosine cap is a prerequisite for binding of nsp16. Therefore plays an essential role in viral mRNAs cap methylation which is essential to evade immune system. This Bat coronavirus HKU3 (BtCoV) protein is Replicase polyprotein 1ab (rep).